The chain runs to 238 residues: Probable xyloglucan-specific endo-beta-1,4-glucanase A (238 aa).

The N-terminal stretch at 1–18 is a signal peptide; it reads MKFSLSVALSLAAATAQA. Residues Asn-106 and Asn-171 are each glycosylated (N-linked (GlcNAc...) asparagine).

It belongs to the glycosyl hydrolase 12 (cellulase H) family.

Its subcellular location is the secreted. It carries out the reaction xyloglucan + H2O = xyloglucan oligosaccharides.. Its function is as follows. Catalyzes endohydrolysis of 1,4-beta-D-glucosidic linkages in xyloglucan with retention of the beta-configuration of the glycosyl residues. Specific for xyloglucan and does not hydrolyze other cell wall components. The protein is Probable xyloglucan-specific endo-beta-1,4-glucanase A (xgeA) of Neosartorya fischeri (strain ATCC 1020 / DSM 3700 / CBS 544.65 / FGSC A1164 / JCM 1740 / NRRL 181 / WB 181) (Aspergillus fischerianus).